We begin with the raw amino-acid sequence, 400 residues long: WD repeat and FYVE domain-containing protein 2 (400 aa).

WD repeat units follow at residues 22–61, 66–105, 112–150, 153–192, 197–236, and 240–279; these read GSQEVVNMAVIVPKEEGVISVSEDRTVRVWLKRDSGQYWP, AMPSPCSCMSFNPETRRLSIGLDNGTISEFILSEDYNKMT, AHQSRVTMILFVLELEWVLSTGQDKQFAWHCSESGQRLG, RTSAVASGLQFDVETRHVFIGDHSGQVTILKLEQENCTLV, GHTGGVTALCWDPVQRVLFSGSSDHSVIMWDIGGRKGTAI, and GHNDRVQALSYAQHTRQLISCGGDGGIVVWNMDVERQETP. An FYVE-type zinc finger spans residues 281–352; the sequence is WLDSDSCQKC…VCDSCHEAIT (72 aa). Positions 287, 290, 314, 317, 322, 325, 344, and 347 each coordinate Zn(2+). One copy of the WD 7 repeat lies at 364-399; that stretch reads DSKHNIVHVHFDATRGWLLTSGTDKVIKLWDMTPVV.

As to quaternary structure, homodimer. Interacts (via WD repeats 1-3) with AKT1, AKT2, PRKCZ and PRKCI. Interacts with VAMP2. Forms a complex with VAMP2 and PRKCZ. Interacts with FOXO1. Forms a complex with AKT1 and FOXO1.

Its subcellular location is the endosome. The protein resides in the early endosome. The protein localises to the cytoplasm. Acts in an adapter protein-like fashion to mediate the interaction between the kinase PRKCZ and its substrate VAMP2 and increases the PRKCZ-dependent phosphorylation of VAMP2. Positively regulates adipocyte differentiation, by facilitating the phosphorylation and thus inactivation of the anti-adipogenetic transcription factor FOXO1 by the kinase AKT1. Plays a role in endosomal control of AKT2 signaling; required for insulin-stimulated AKT2 phosphorylation and glucose uptake and insulin-stimulated phosphorylation of AKT2 substrates. Participates in transferrin receptor endocytosis. This Homo sapiens (Human) protein is WD repeat and FYVE domain-containing protein 2 (WDFY2).